The primary structure comprises 156 residues: tRNA (cytidine(34)-2'-O)-methyltransferase (156 aa).

Glycine 102, leucine 124, and serine 132 together coordinate S-adenosyl-L-methionine.

Belongs to the class IV-like SAM-binding methyltransferase superfamily. RNA methyltransferase TrmH family. TrmL subfamily. As to quaternary structure, homodimer.

It localises to the cytoplasm. The enzyme catalyses cytidine(34) in tRNA + S-adenosyl-L-methionine = 2'-O-methylcytidine(34) in tRNA + S-adenosyl-L-homocysteine + H(+). The catalysed reaction is 5-carboxymethylaminomethyluridine(34) in tRNA(Leu) + S-adenosyl-L-methionine = 5-carboxymethylaminomethyl-2'-O-methyluridine(34) in tRNA(Leu) + S-adenosyl-L-homocysteine + H(+). In terms of biological role, methylates the ribose at the nucleotide 34 wobble position in the two leucyl isoacceptors tRNA(Leu)(CmAA) and tRNA(Leu)(cmnm5UmAA). Catalyzes the methyl transfer from S-adenosyl-L-methionine to the 2'-OH of the wobble nucleotide. The chain is tRNA (cytidine(34)-2'-O)-methyltransferase from Burkholderia pseudomallei (strain 1106a).